A 249-amino-acid chain; its full sequence is 2,3-bisphosphoglycerate-dependent phosphoglycerate mutase (249 aa).

Substrate contacts are provided by residues 11-18 (RHGESDWN), 24-25 (TG), Arg-63, 90-93 (ERHY), Lys-101, 117-118 (RR), and 184-185 (GN). The Tele-phosphohistidine intermediate role is filled by His-12. Residue Glu-90 is the Proton donor/acceptor of the active site.

This sequence belongs to the phosphoglycerate mutase family. BPG-dependent PGAM subfamily.

It catalyses the reaction (2R)-2-phosphoglycerate = (2R)-3-phosphoglycerate. Its pathway is carbohydrate degradation; glycolysis; pyruvate from D-glyceraldehyde 3-phosphate: step 3/5. Catalyzes the interconversion of 2-phosphoglycerate and 3-phosphoglycerate. This chain is 2,3-bisphosphoglycerate-dependent phosphoglycerate mutase, found in Mycobacterium bovis (strain BCG / Pasteur 1173P2).